The primary structure comprises 426 residues: Chaperone SurA (426 aa).

A signal peptide spans 1–13 (MLGALFLSTAASA). PpiC domains follow at residues 164-265 (SEEL…KLLD) and 274-373 (RDEV…EVLG).

The protein localises to the periplasm. It carries out the reaction [protein]-peptidylproline (omega=180) = [protein]-peptidylproline (omega=0). Chaperone involved in the correct folding and assembly of outer membrane proteins. Recognizes specific patterns of aromatic residues and the orientation of their side chains, which are found more frequently in integral outer membrane proteins. May act in both early periplasmic and late outer membrane-associated steps of protein maturation. This chain is Chaperone SurA, found in Pseudomonas fluorescens (strain ATCC BAA-477 / NRRL B-23932 / Pf-5).